Here is a 79-residue protein sequence, read N- to C-terminus: D-alanyl carrier protein (79 aa).

In terms of domain architecture, Carrier spans 1–77 (MSIEETVIEL…KIVQGVEELQ (77 aa)). Ser-35 carries the post-translational modification O-(pantetheine 4'-phosphoryl)serine.

It belongs to the DltC family. In terms of processing, 4'-phosphopantetheine is transferred from CoA to a specific serine of apo-DCP.

It localises to the cytoplasm. It participates in cell wall biogenesis; lipoteichoic acid biosynthesis. Carrier protein involved in the D-alanylation of lipoteichoic acid (LTA). The loading of thioester-linked D-alanine onto DltC is catalyzed by D-alanine--D-alanyl carrier protein ligase DltA. The DltC-carried D-alanyl group is further transferred to cell membrane phosphatidylglycerol (PG) by forming an ester bond, probably catalyzed by DltD. D-alanylation of LTA plays an important role in modulating the properties of the cell wall in Gram-positive bacteria, influencing the net charge of the cell wall. This Streptococcus pyogenes serotype M1 protein is D-alanyl carrier protein.